Reading from the N-terminus, the 585-residue chain is Staphyloferrin A synthase (585 aa).

The protein belongs to the IucA/IucC family.

The enzyme catalyses N(5)-[(S)-citryl]-D-ornithine + citrate + ATP = staphyloferrin A + AMP + diphosphate + H(+). The protein operates within siderophore biosynthesis. Functionally, involved in the biosynthesis of the siderophore staphyloferrin A. Catalyzes the ATP-dependent condensation of a citryl-D-ornithine intermediate, produced by SfnaD, and citrate to form staphyloferrin A. The polypeptide is Staphyloferrin A synthase (Staphylococcus aureus (strain NCTC 8325 / PS 47)).